Consider the following 349-residue polypeptide: Homoserine O-succinyltransferase (349 aa).

C146 (acyl-thioester intermediate) is an active-site residue. Substrate-binding residues include K167 and S196. H239 functions as the Proton acceptor in the catalytic mechanism. The active site involves E241. Position 253 (R253) interacts with substrate.

Belongs to the MetA family.

It is found in the cytoplasm. It catalyses the reaction L-homoserine + succinyl-CoA = O-succinyl-L-homoserine + CoA. Its pathway is amino-acid biosynthesis; L-methionine biosynthesis via de novo pathway; O-succinyl-L-homoserine from L-homoserine: step 1/1. Its function is as follows. Transfers a succinyl group from succinyl-CoA to L-homoserine, forming succinyl-L-homoserine. In vitro, can also use glutaryl-CoA as acyl donor. The polypeptide is Homoserine O-succinyltransferase (Thiobacillus denitrificans (strain ATCC 25259 / T1)).